The chain runs to 403 residues: MEKQSPAQTISLFVLLALMFVLVCMLFVPYLTVLLWSSILAILLSPCYRALCARIDMHAFTRTRHLVSHMNGEDGCTAAITRATRFQKKMLAAVFSLVITLLVTTVFFFIAISLFGQGKLLFDKLSLFFREYDLFEGAKQRSFTALIFKLSRGTVDISTLNVEEHLLRFFGKHVESVFVYTQIFVKNIARAALSTLFFSFTLYFFFLDGEHLSCLLIAALPLRKRASAQLLEKCKEATRHLFKGLFSIAFYQTCVAFVFYGIFRVEGPMALAMLTFFASFLPLVGCACVWLPVGISIGFTSGWMRGTLFLFVAGSSITIIDSFLRPLLLQNKMRIHPLLIFFSMLGGVQTFGFNGMVLGPILVILLFTVIDLTHDGESHYTSIFHDPPAAGVHAQSIHRQGKK.

Helical transmembrane passes span Ile-10–Tyr-30, Leu-31–Leu-51, Ala-92–Ile-112, Leu-202–Leu-222, Lys-243–Phe-263, Leu-271–Leu-291, Val-293–Ala-313, and Thr-350–Ile-370.

It belongs to the autoinducer-2 exporter (AI-2E) (TC 2.A.86) family.

It localises to the cell membrane. This is Putative transport protein TP_0553 from Treponema pallidum (strain Nichols).